A 266-amino-acid chain; its full sequence is Glucosamine-6-phosphate deaminase (266 aa).

Residue Asp72 is the Proton acceptor; for enolization step of the active site. Asp141 acts as the For ring-opening step in catalysis. The active-site Proton acceptor; for ring-opening step is His143. Catalysis depends on Glu148, which acts as the For ring-opening step.

The protein belongs to the glucosamine/galactosamine-6-phosphate isomerase family. NagB subfamily. As to quaternary structure, homohexamer.

It catalyses the reaction alpha-D-glucosamine 6-phosphate + H2O = beta-D-fructose 6-phosphate + NH4(+). It functions in the pathway amino-sugar metabolism; N-acetylneuraminate degradation; D-fructose 6-phosphate from N-acetylneuraminate: step 5/5. With respect to regulation, allosterically activated by N-acetylglucosamine 6-phosphate (GlcNAc6P). Catalyzes the reversible isomerization-deamination of glucosamine 6-phosphate (GlcN6P) to form fructose 6-phosphate (Fru6P) and ammonium ion. This chain is Glucosamine-6-phosphate deaminase, found in Vibrio campbellii (strain ATCC BAA-1116).